Reading from the N-terminus, the 524-residue chain is AAA ATPase forming ring-shaped complexes (524 aa).

Positions 1–29 (MGMGQEKHTDAASQSRDPEAVAAHENDQL) are disordered. Residues 22-59 (AAHENDQLRQRNHALAKALTRATEELRKAKAQLEQFMA) adopt a coiled-coil conformation. Position 250 to 255 (250 to 255 (GNGKTL)) interacts with ATP.

This sequence belongs to the AAA ATPase family. As to quaternary structure, homohexamer. Assembles into a hexameric ring structure.

The protein is AAA ATPase forming ring-shaped complexes of Bifidobacterium animalis subsp. lactis (strain BB-12).